Reading from the N-terminus, the 261-residue chain is Putative hydro-lyase Sfum_3393 (261 aa).

It belongs to the D-glutamate cyclase family.

The sequence is that of Putative hydro-lyase Sfum_3393 from Syntrophobacter fumaroxidans (strain DSM 10017 / MPOB).